Here is a 183-residue protein sequence, read N- to C-terminus: Translocon-associated protein subunit beta (183 aa).

Positions 1-17 (MRLLAFAVLALFAVTQA) are cleaved as a signal peptide. The Lumenal segment spans residues 18-146 (EEGARLLASK…REFDRRFSPH (129 aa)). A glycan (N-linked (GlcNAc...) asparagine) is linked at N88. Residues 147–167 (FLDWAAFGVMTLPSIGVPLLL) traverse the membrane as a helical segment. Topologically, residues 168-183 (WYSSKRKYDTPKTKKN) are cytoplasmic.

This sequence belongs to the TRAP-beta family. In terms of assembly, heterotetramer of TRAP-alpha, TRAP-beta, TRAP-delta and TRAP-gamma. Interacts with STING1.

Its subcellular location is the endoplasmic reticulum membrane. Functionally, TRAP proteins are part of a complex whose function is to bind calcium to the ER membrane and thereby regulate the retention of ER resident proteins. This is Translocon-associated protein subunit beta (SSR2) from Bos taurus (Bovine).